We begin with the raw amino-acid sequence, 298 residues long: Probable alpha-L-glutamate ligase (298 aa).

In terms of domain architecture, ATP-grasp spans 108–290 (LQLLLKTGVP…IAAEIIDYIE (183 aa)). ATP contacts are provided by residues Lys-144, 181 to 182 (DF), Asp-190, and 214 to 216 (RAN). Asp-251, Glu-263, and Asn-265 together coordinate Mg(2+). Mn(2+)-binding residues include Asp-251, Glu-263, and Asn-265.

It belongs to the RimK family. Mg(2+) is required as a cofactor. Requires Mn(2+) as cofactor.

The protein is Probable alpha-L-glutamate ligase of Haemophilus influenzae (strain PittEE).